Consider the following 510-residue polypeptide: NAD(P)H-quinone oxidoreductase subunit 2, chloroplastic (510 aa).

12 consecutive transmembrane segments (helical) span residues 24–44, 59–79, 99–119, 124–144, 149–169, 183–203, 229–249, 295–315, 323–343, 354–374, 395–415, and 418–438; these read LLLFHGSFIFPECILIFGLIL, WFYFISSTSLIISITALLFRW, IFQFLILLCSTLCIPLSVEYI, MAITEFLLFVLTATLGGMFLC, LITIFVAPECFSLCSYLLSGY, YLLMGGASSSILVHGFSWLYG, ISIALISITVGIGFKLSPAPF, WHLLLEILAILSMILGNLIAI, MLAYSSIGQIGYVIIGIIVGD, YMLFYISMNLGTFACIVLFGL, ALSSALCLLSLGGLPPLAGFF, and LHLFWCGWQAGLYFLVSIGLL.

The protein belongs to the complex I subunit 2 family. As to quaternary structure, NDH is composed of at least 16 different subunits, 5 of which are encoded in the nucleus.

It localises to the plastid. It is found in the chloroplast thylakoid membrane. The catalysed reaction is a plastoquinone + NADH + (n+1) H(+)(in) = a plastoquinol + NAD(+) + n H(+)(out). It catalyses the reaction a plastoquinone + NADPH + (n+1) H(+)(in) = a plastoquinol + NADP(+) + n H(+)(out). Its function is as follows. NDH shuttles electrons from NAD(P)H:plastoquinone, via FMN and iron-sulfur (Fe-S) centers, to quinones in the photosynthetic chain and possibly in a chloroplast respiratory chain. The immediate electron acceptor for the enzyme in this species is believed to be plastoquinone. Couples the redox reaction to proton translocation, and thus conserves the redox energy in a proton gradient. The protein is NAD(P)H-quinone oxidoreductase subunit 2, chloroplastic of Ensete ventricosum (Abyssinian banana).